A 321-amino-acid chain; its full sequence is MIFIYAIIALLITFILVPILIPTLKRMKFGQSIREEGPQSHMKKTGTPTMGGLTFLISIIITSIIAIIFVDHSNPIILLLFVTIGFGLIGFIDDYIIVVKKNNQGLTSKQKFLAQIIIAVIFFVLSDVFHLVHFTTDLHIPFVNFDIPLSFAYVIFIVFWQVGFSNAVNLTDGLDGLATGLSIIGFAMYAVMSYMLDSPAIGIFCIIMIFALLGFLPYNLNPAKVFMGDTGSLALGGIFATISIMLNQELSLILIGFVFVVETLSVMLQVASYKLTKKRIFKMSPIHHHFELSGWGEWKVVTVFWTVGLITGLIGLWIGVH.

The next 10 helical transmembrane spans lie at 1–21 (MIFI…PILI), 50–70 (MGGL…IIFV), 76–96 (IILL…DDYI), 112–132 (FLAQ…FHLV), 140–160 (IPFV…IVFW), 176–196 (GLAT…SYML), 200–220 (AIGI…PYNL), 225–245 (VFMG…ISIM), 250–270 (LSLI…MLQV), and 300–320 (VVTV…WIGV).

Belongs to the glycosyltransferase 4 family. MraY subfamily. It depends on Mg(2+) as a cofactor.

It localises to the cell membrane. It catalyses the reaction UDP-N-acetyl-alpha-D-muramoyl-L-alanyl-gamma-D-glutamyl-L-lysyl-D-alanyl-D-alanine + di-trans,octa-cis-undecaprenyl phosphate = Mur2Ac(oyl-L-Ala-gamma-D-Glu-L-Lys-D-Ala-D-Ala)-di-trans,octa-cis-undecaprenyl diphosphate + UMP. It functions in the pathway cell wall biogenesis; peptidoglycan biosynthesis. Its function is as follows. Catalyzes the initial step of the lipid cycle reactions in the biosynthesis of the cell wall peptidoglycan: transfers peptidoglycan precursor phospho-MurNAc-pentapeptide from UDP-MurNAc-pentapeptide onto the lipid carrier undecaprenyl phosphate, yielding undecaprenyl-pyrophosphoryl-MurNAc-pentapeptide, known as lipid I. This is Phospho-N-acetylmuramoyl-pentapeptide-transferase from Staphylococcus epidermidis (strain ATCC 35984 / DSM 28319 / BCRC 17069 / CCUG 31568 / BM 3577 / RP62A).